Consider the following 237-residue polypeptide: Large ribosomal subunit protein uL3 (237 aa).

Disordered regions lie at residues 133 to 155 (ASHG…DPGK) and 213 to 237 (PENA…EGAE). Residues 135–150 (HGNSITHRSHGSTGQR) show a composition bias toward polar residues. Q151 is subject to N5-methylglutamine. The span at 220 to 237 (AGLRAGAKAEAAATEGAE) shows a compositional bias: low complexity.

It belongs to the universal ribosomal protein uL3 family. In terms of assembly, part of the 50S ribosomal subunit. Forms a cluster with proteins L14 and L19. Methylated by PrmB.

Functionally, one of the primary rRNA binding proteins, it binds directly near the 3'-end of the 23S rRNA, where it nucleates assembly of the 50S subunit. This is Large ribosomal subunit protein uL3 from Brucella suis biovar 1 (strain 1330).